A 131-amino-acid chain; its full sequence is Small ribosomal subunit protein uS8 (131 aa).

It belongs to the universal ribosomal protein uS8 family. As to quaternary structure, part of the 30S ribosomal subunit. Contacts proteins S5 and S12.

In terms of biological role, one of the primary rRNA binding proteins, it binds directly to 16S rRNA central domain where it helps coordinate assembly of the platform of the 30S subunit. This Hyphomonas neptunium (strain ATCC 15444) protein is Small ribosomal subunit protein uS8.